Here is a 709-residue protein sequence, read N- to C-terminus: Potassium-transporting ATPase ATP-binding subunit (709 aa).

A run of 4 helical transmembrane segments spans residues 55–75 (VMLV…RDLA), 86–106 (GLVA…EAMA), 236–256 (IALN…VVTL), and 269–289 (VVVL…ALLS). The 4-aspartylphosphate intermediate role is filled by Asp324. ATP contacts are provided by residues Asp361, Glu365, 395–402 (FTAETRMS), and Lys417. Residues Asp545 and Asp549 each coordinate Mg(2+). Helical transmembrane passes span 615-635 (FAII…LNVM), 643-663 (AILS…PLAL), and 688-708 (GLVV…ALGV).

This sequence belongs to the cation transport ATPase (P-type) (TC 3.A.3) family. Type IA subfamily. As to quaternary structure, the system is composed of three essential subunits: KdpA, KdpB and KdpC.

The protein resides in the cell membrane. The catalysed reaction is K(+)(out) + ATP + H2O = K(+)(in) + ADP + phosphate + H(+). Its function is as follows. Part of the high-affinity ATP-driven potassium transport (or Kdp) system, which catalyzes the hydrolysis of ATP coupled with the electrogenic transport of potassium into the cytoplasm. This subunit is responsible for energy coupling to the transport system and for the release of the potassium ions to the cytoplasm. This chain is Potassium-transporting ATPase ATP-binding subunit, found in Mycobacterium tuberculosis (strain ATCC 25618 / H37Rv).